Reading from the N-terminus, the 172-residue chain is RNA pyrophosphohydrolase (172 aa).

The Nudix hydrolase domain maps to 6–149; sequence GYRLNVGIVI…KRDVYRRAMK (144 aa). A Nudix box motif is present at residues 38–59; it reads GGIDEGETPEQAMYRELYEEVG.

Belongs to the Nudix hydrolase family. RppH subfamily. Requires a divalent metal cation as cofactor.

In terms of biological role, accelerates the degradation of transcripts by removing pyrophosphate from the 5'-end of triphosphorylated RNA, leading to a more labile monophosphorylated state that can stimulate subsequent ribonuclease cleavage. This chain is RNA pyrophosphohydrolase, found in Vibrio atlanticus (strain LGP32) (Vibrio splendidus (strain Mel32)).